Here is a 119-residue protein sequence, read N- to C-terminus: MLPAQHRMTRSTEFGATVSKGTRAAQPDVVVYRLRSDQTADPGPRVGLIVSKAVGNAVQRHRVSRRLRHAALAVLEDLDPSDRVVIRALPRSRDAVTPRLEQELRTALERIRQRTGAPS.

A disordered region spans residues methionine 1–lysine 20.

Belongs to the RnpA family. Consists of a catalytic RNA component (M1 or rnpB) and a protein subunit.

It carries out the reaction Endonucleolytic cleavage of RNA, removing 5'-extranucleotides from tRNA precursor.. In terms of biological role, RNaseP catalyzes the removal of the 5'-leader sequence from pre-tRNA to produce the mature 5'-terminus. It can also cleave other RNA substrates such as 4.5S RNA. The protein component plays an auxiliary but essential role in vivo by binding to the 5'-leader sequence and broadening the substrate specificity of the ribozyme. This Mycolicibacterium vanbaalenii (strain DSM 7251 / JCM 13017 / BCRC 16820 / KCTC 9966 / NRRL B-24157 / PYR-1) (Mycobacterium vanbaalenii) protein is Ribonuclease P protein component.